A 352-amino-acid chain; its full sequence is Phosphoribosylformylglycinamidine cyclo-ligase (352 aa).

Belongs to the AIR synthase family.

It is found in the cytoplasm. The catalysed reaction is 2-formamido-N(1)-(5-O-phospho-beta-D-ribosyl)acetamidine + ATP = 5-amino-1-(5-phospho-beta-D-ribosyl)imidazole + ADP + phosphate + H(+). It functions in the pathway purine metabolism; IMP biosynthesis via de novo pathway; 5-amino-1-(5-phospho-D-ribosyl)imidazole from N(2)-formyl-N(1)-(5-phospho-D-ribosyl)glycinamide: step 2/2. This chain is Phosphoribosylformylglycinamidine cyclo-ligase, found in Coxiella burnetii (strain RSA 331 / Henzerling II).